The primary structure comprises 441 residues: Tubulin beta chain, nucleomorph (441 aa).

The GTP site is built by glutamine 11, glutamate 69, serine 138, glycine 142, threonine 143, glycine 144, asparagine 204, and asparagine 226. Glutamate 69 is a Mg(2+) binding site.

Belongs to the tubulin family. Dimer of alpha and beta chains. A typical microtubule is a hollow water-filled tube with an outer diameter of 25 nm and an inner diameter of 15 nM. Alpha-beta heterodimers associate head-to-tail to form protofilaments running lengthwise along the microtubule wall with the beta-tubulin subunit facing the microtubule plus end conferring a structural polarity. Microtubules usually have 13 protofilaments but different protofilament numbers can be found in some organisms and specialized cells. Requires Mg(2+) as cofactor.

Functionally, tubulin is the major constituent of microtubules, a cylinder consisting of laterally associated linear protofilaments composed of alpha- and beta-tubulin heterodimers. Microtubules grow by the addition of GTP-tubulin dimers to the microtubule end, where a stabilizing cap forms. Below the cap, tubulin dimers are in GDP-bound state, owing to GTPase activity of alpha-tubulin. In Guillardia theta (Cryptophyte), this protein is Tubulin beta chain, nucleomorph (tubB).